Consider the following 167-residue polypeptide: Small ribosomal subunit protein uS7c (167 aa).

It belongs to the universal ribosomal protein uS7 family. Part of the 30S ribosomal subunit.

It is found in the plastid. The protein resides in the chloroplast. In terms of biological role, one of the primary rRNA binding proteins, it binds directly to 16S rRNA where it nucleates assembly of the head domain of the 30S subunit. The polypeptide is Small ribosomal subunit protein uS7c (rps7) (Tetradesmus obliquus (Green alga)).